A 308-amino-acid chain; its full sequence is ADP-L-glycero-D-manno-heptose-6-epimerase (308 aa).

Residues 10 to 11, 31 to 32, Lys-38, Lys-53, 75 to 79, and Asn-92 contribute to the NADP(+) site; these read FI, DN, and EGACS. Tyr-139 functions as the Proton acceptor in the catalytic mechanism. An NADP(+)-binding site is contributed by Lys-143. Asn-168 contributes to the substrate binding site. NADP(+) contacts are provided by Val-169 and Lys-177. The active-site Proton acceptor is the Lys-177. Substrate is bound by residues Ser-179, His-186, 200 to 203, Arg-208, and Tyr-271; that span reads FAGS.

It belongs to the NAD(P)-dependent epimerase/dehydratase family. HldD subfamily. As to quaternary structure, homopentamer. NADP(+) is required as a cofactor.

It carries out the reaction ADP-D-glycero-beta-D-manno-heptose = ADP-L-glycero-beta-D-manno-heptose. The protein operates within nucleotide-sugar biosynthesis; ADP-L-glycero-beta-D-manno-heptose biosynthesis; ADP-L-glycero-beta-D-manno-heptose from D-glycero-beta-D-manno-heptose 7-phosphate: step 4/4. It participates in bacterial outer membrane biogenesis; LOS core biosynthesis. Functionally, catalyzes the interconversion between ADP-D-glycero-beta-D-manno-heptose and ADP-L-glycero-beta-D-manno-heptose via an epimerization at carbon 6 of the heptose. The chain is ADP-L-glycero-D-manno-heptose-6-epimerase from Haemophilus influenzae (strain ATCC 51907 / DSM 11121 / KW20 / Rd).